Consider the following 394-residue polypeptide: uncharacterized protein (394 aa).

Transmembrane regions (helical) follow at residues 22–42, 60–80, 81–101, 231–251, 271–291, 303–323, 328–348, and 355–375; these read VLVS…VLLH, LALF…LLLF, GFTG…APVA, LHLA…YLWL, GFCA…QLAP, LFLV…GDWP, LLGV…APWL, and ALGP…HAWM.

Its subcellular location is the cell membrane. This is an uncharacterized protein from Pseudomonas aeruginosa (strain ATCC 15692 / DSM 22644 / CIP 104116 / JCM 14847 / LMG 12228 / 1C / PRS 101 / PAO1).